The primary structure comprises 1481 residues: MQKSPLVKASVISKLFFSWTRPILKKGYRKRLEVSDIYQVPSADSADNLSEELEREWDRELASKKNPKLINALRRCFLWRFIFYGILLYLGEVTKAVQPLLLGRIIASYDPDNKEERSIAIYLAIGLCLLFIVRTLLLHPAIFGLQHIGMQMRIAMFSLIYKKTLKLSSRVLDKISIGQLVSLLSNNLNKFDEGLALAHFVWIAPLQVTLLMGLLWDLLQASAFCGLAVLIVLALFQAWLGKMMMKYRDQRAGKINERLVITSEMIENIQSVKAYCWEEAMEKMIENLRQTELKLTRKAAYMRYFNSAAFFFSGFFVVFLSVLPYAFLQGIILRKIFTTISFCIVLRMAITRQFPGAVQTWYDSLGAINKIQDFLQKQEYKTLEYNLTTTEVVMENVTAFWEEQGFGELLEKAKLNNNNRKISNGDNKLFFSNFSLLGSPVLKDINFKIEKGQLLAVAGSTGAGKTSLLMMILGELEPSEGKIKHSGRVSFCSQFSWIMPGTIKENIIFGVSYDEYRYRSVIKACQLEEDISKFAEKDNIVLGEGGITLSGGQRARISLARAVYKDADLYLLDSPFGYLDVLTEKQIFESCVCKLMANKTRILVTSKMEHLKKADKILILHEGSSYFYGTFSELQNLRPDFSSKLMGYDSFDQFSAERRNSILTETLRRFSLEGDPSVSFNETKKQSFKQTGEFGEKRKNSILNSINSIRKFSIVPKTPLQISGIEEDSDDPVERRLSLVPDSEQSDGLLLRSNVIHTGPTFQGSRRQSVLNLITHSVNQGQSFRRTTTAPSRKMSLAPQASLTEMDIYSRRLSQDSSLEINEEINEEDLKECFFDDVENIPTVTTWNTYLRYITVHKSLILVLIWCLIIFLAEVAASLVVLWLLKNNTPQQEMNSTQSGNRSYPVIITNTSFYYIFYIYVGVADTLLALGLFRGLPLVHTLITVSKILHHKMLRSVLQAPMSTLNALKAGGILNRFSKDIAILDDLLPLTIFDFIQLLLIVIGAIAVVSVLQPYIFLATVPVIAAFIMLRAYFLHTSQQLKQLESEGRSPIFTHLVTSLKGLWTLRAFGRQPYFETLFHKALNLHTANWFLYLSTLRWFQMRIEMIFVIFFIAVTFISILTTGEGQGSVGIILTLAMNIMSTLQWAVNSSIDVDSLMRSVSRVFKFIDMPEEGAPVKSIKPSRDDQLSKVMIIENQHVKKDDIWPSGGQMIVKDLTAKYVDGGIAILENISFSISPGQRVGLLGRTGSGKSTLLSAFLRLLNTEGEIQIDGVSWDSTPLQQWRKAFGVIPQKVFIFSGTFRKNLDPFGQWSDQEIWKVADEVGLRSVIEQFPGKLDFVLVDGGYVLSHGHKQLMCLARSVLSKAKILLLDEPSAHLDPITYQIIRRTIKQAFADCTVILCEHRIEAMLECQRFLVIEENKVRQYDSIQKLLSEKSLFRQAISSSDRLKLFPHRNSSKHKSRSQITALKEETEEEVQETRL.

The Cytoplasmic portion of the chain corresponds to 1–77 (MQKSPLVKAS…KLINALRRCF (77 aa)). Residues 78 to 98 (LWRFIFYGILLYLGEVTKAVQ) form a helical membrane-spanning segment. One can recognise an ABC transmembrane type-1 1 domain in the interval 81-365 (FIFYGILLYL…GAVQTWYDSL (285 aa)). The Extracellular segment spans residues 99 to 122 (PLLLGRIIASYDPDNKEERSIAIY). The helical transmembrane segment at 123 to 146 (LAIGLCLLFIVRTLLLHPAIFGLQ) threads the bilayer. Over 147–195 (HIGMQMRIAMFSLIYKKTLKLSSRVLDKISIGQLVSLLSNNLNKFDEGL) the chain is Cytoplasmic. A helical membrane pass occupies residues 196 to 216 (ALAHFVWIAPLQVTLLMGLLW). At 217 to 222 (DLLQAS) the chain is on the extracellular side. Residues 223 to 243 (AFCGLAVLIVLALFQAWLGKM) form a helical membrane-spanning segment. The Cytoplasmic portion of the chain corresponds to 244–298 (MMKYRDQRAGKINERLVITSEMIENIQSVKAYCWEEAMEKMIENLRQTELKLTRK). The helical transmembrane segment at 299-319 (AAYMRYFNSAAFFFSGFFVVF) threads the bilayer. Residues 320 to 339 (LSVLPYAFLQGIILRKIFTT) are Extracellular-facing. Residues 340 to 358 (ISFCIVLRMAITRQFPGAV) form a helical membrane-spanning segment. Topologically, residues 359-859 (QTWYDSLGAI…YLRYITVHKS (501 aa)) are cytoplasmic. ATP is bound by residues Trp-401, Ser-435, 459 to 466 (GSTGAGKT), and Gln-494. The 224-residue stretch at 424–647 (NGDNKLFFSN…RPDFSSKLMG (224 aa)) folds into the ABC transporter 1 domain. Cys-525 carries S-palmitoyl cysteine lipidation. At Ser-550 the chain carries Phosphoserine. The tract at residues 655–832 (SAERRNSILT…EEINEEDLKE (178 aa)) is disordered R region. A phosphoserine; by PKA mark is found at Ser-661 and Ser-671. Ser-687 bears the Phosphoserine; by PKC mark. A Glycyl lysine isopeptide (Lys-Gly) (interchain with G-Cter in ubiquitin) cross-link involves residue Lys-689. Phosphoserine; by PKA is present on residues Ser-701 and Ser-713. A Phosphothreonine modification is found at Thr-718. 4 positions are modified to phosphoserine; by PKA: Ser-738, Ser-769, Ser-796, and Ser-814. Residues 860–880 (LILVLIWCLIIFLAEVAASLV) form a helical membrane-spanning segment. The region spanning 860–1156 (LILVLIWCLI…AVNSSIDVDS (297 aa)) is the ABC transmembrane type-1 2 domain. The Extracellular segment spans residues 881–919 (VLWLLKNNTPQQEMNSTQSGNRSYPVIITNTSFYYIFYI). 2 N-linked (GlcNAc...) asparagine glycosylation sites follow: Asn-895 and Asn-901. A discontinuously helical transmembrane segment spans residues 920 to 940 (YVGVADTLLALGLFRGLPLVH). Over 941-991 (TLITVSKILHHKMLRSVLQAPMSTLNALKAGGILNRFSKDIAILDDLLPLT) the chain is Cytoplasmic. The helical transmembrane segment at 992–1012 (IFDFIQLLLIVIGAIAVVSVL) threads the bilayer. The Extracellular segment spans residues 1013 to 1014 (QP). The helical transmembrane segment at 1015 to 1035 (YIFLATVPVIAAFIMLRAYFL) threads the bilayer. Over 1036 to 1096 (HTSQQLKQLE…TANWFLYLST (61 aa)) the chain is Cytoplasmic. A helical membrane pass occupies residues 1097–1117 (LRWFQMRIEMIFVIFFIAVTF). The Extracellular portion of the chain corresponds to 1118–1131 (ISILTTGEGQGSVG). The helical transmembrane segment at 1132-1152 (IILTLAMNIMSTLQWAVNSSI) threads the bilayer. Residues 1153-1481 (DVDSLMRSVS…TEEEVQETRL (329 aa)) are Cytoplasmic-facing. Residues 1211 to 1444 (MIVKDLTAKY…KSLFRQAISS (234 aa)) enclose the ABC transporter 2 domain. Residues Tyr-1220 and 1245-1252 (GRTGSGKS) contribute to the ATP site. The interaction with GORASP2 stretch occupies residues 1387-1481 (RTIKQAFADC…TEEEVQETRL (95 aa)). Cys-1396 is lipidated: S-palmitoyl cysteine. 2 positions are modified to phosphoserine: Ser-1445 and Ser-1457. Residues 1453–1462 (HRNSSKHKSR) are compositionally biased toward basic residues. Positions 1453-1481 (HRNSSKHKSRSQITALKEETEEEVQETRL) are disordered. Residues 1471–1481 (ETEEEVQETRL) are compositionally biased toward acidic residues. Residues 1479-1481 (TRL) carry the PDZ-binding motif.

Belongs to the ABC transporter superfamily. ABCC family. CFTR transporter (TC 3.A.1.202) subfamily. As to quaternary structure, monomer; does not require oligomerization for channel activity. May form oligomers in the membrane. Interacts with SLC26A3, SLC26A6 and NHERF1. Interacts with SHANK2. Interacts with MYO6. Interacts (via C-terminus) with GOPC (via PDZ domain); this promotes CFTR internalization and thereby decreases channel activity. Interacts with SLC4A7 through NHERF1. Found in a complex with MYO5B and RAB11A. Interacts with ANO1. Interacts with SLC26A8. Interacts with AHCYL1; the interaction increases CFTR activity. Interacts with CSE1L. The core-glycosylated form interacts with GORASP2 (via PDZ GRASP-type 1 domain) in respone to ER stress. Interacts with MARCHF2; the interaction leads to CFTR ubiqtuitination and degradation. Interacts with ADGRG2. N-glycosylated. In terms of processing, phosphorylated; cAMP treatment promotes phosphorylation and activates the channel. Dephosphorylation decreases the ATPase activity (in vitro). Phosphorylation at PKA sites activates the channel. Phosphorylation at PKC sites enhances the response to phosphorylation by PKA. Phosphorylated by AMPK; this inhibits channel activity. Post-translationally, ubiquitinated, leading to its degradation in the lysosome. Deubiquitination by USP10 in early endosomes enhances its endocytic recycling to the cell membrane. Ubiquitinated by RNF185 during ER stress. Ubiquitinated by MARCHF2.

The protein localises to the apical cell membrane. It is found in the early endosome membrane. The protein resides in the cell membrane. Its subcellular location is the recycling endosome membrane. It localises to the endoplasmic reticulum membrane. The protein localises to the nucleus. It carries out the reaction ATP + H2O + closed Cl(-) channel = ADP + phosphate + open Cl(-) channel.. It catalyses the reaction chloride(in) = chloride(out). The catalysed reaction is hydrogencarbonate(in) = hydrogencarbonate(out). The enzyme catalyses ATP + H2O = ADP + phosphate + H(+). In terms of biological role, epithelial ion channel that plays an important role in the regulation of epithelial ion and water transport and fluid homeostasis. Mediates the transport of chloride ions across the cell membrane. Possesses an intrinsic ATPase activity and utilizes ATP to gate its channel; the passive flow of anions through the channel is gated by cycles of ATP binding and hydrolysis by the ATP-binding domains. The ion channel is also permeable to HCO(3)(-); selectivity depends on the extracellular chloride concentration. Exerts its function also by modulating the activity of other ion channels and transporters. Contributes to the regulation of the pH and the ion content of the epithelial fluid layer. Modulates the activity of the epithelial sodium channel (ENaC) complex, in part by regulating the cell surface expression of the ENaC complex. May regulate bicarbonate secretion and salvage in epithelial cells by regulating the transporter SLC4A7. Can inhibit the chloride channel activity of ANO1. Plays a role in the chloride and bicarbonate homeostasis during sperm epididymal maturation and capacitation. The protein is Cystic fibrosis transmembrane conductance regulator of Cavia porcellus (Guinea pig).